Consider the following 497-residue polypeptide: Cytochrome P450 71A18 (497 aa).

A helical membrane pass occupies residues 4-24 (TLMVSLCLTTLLTLLLLKKFL). Cys-439 contacts heme.

It belongs to the cytochrome P450 family. The cofactor is heme.

It is found in the membrane. This Arabidopsis thaliana (Mouse-ear cress) protein is Cytochrome P450 71A18 (CYP71A18).